The sequence spans 283 residues: Pantothenate synthetase (283 aa).

30–37 (MGYFHDGH) lines the ATP pocket. Residue His-37 is the Proton donor of the active site. Gln-61 lines the (R)-pantoate pocket. Gln-61 serves as a coordination point for beta-alanine. Residue 147-150 (GSKD) coordinates ATP. (R)-pantoate is bound at residue Gln-153. ATP contacts are provided by residues Val-176 and 184–187 (MSSR).

It belongs to the pantothenate synthetase family. As to quaternary structure, homodimer.

The protein resides in the cytoplasm. The catalysed reaction is (R)-pantoate + beta-alanine + ATP = (R)-pantothenate + AMP + diphosphate + H(+). Its pathway is cofactor biosynthesis; (R)-pantothenate biosynthesis; (R)-pantothenate from (R)-pantoate and beta-alanine: step 1/1. Functionally, catalyzes the condensation of pantoate with beta-alanine in an ATP-dependent reaction via a pantoyl-adenylate intermediate. This Desulforapulum autotrophicum (strain ATCC 43914 / DSM 3382 / VKM B-1955 / HRM2) (Desulfobacterium autotrophicum) protein is Pantothenate synthetase.